The sequence spans 173 residues: dCTP deaminase, dUMP-forming (173 aa).

Residues 93 to 98 (RSSTGR), aspartate 111, 119 to 121 (TLE), glutamine 138, and tyrosine 151 contribute to the dCTP site. The active-site Proton donor/acceptor is the glutamate 121.

The protein belongs to the dCTP deaminase family. Homotrimer.

The enzyme catalyses dCTP + 2 H2O = dUMP + NH4(+) + diphosphate. It functions in the pathway pyrimidine metabolism; dUMP biosynthesis; dUMP from dCTP: step 1/1. Its function is as follows. Bifunctional enzyme that catalyzes both the deamination of dCTP to dUTP and the hydrolysis of dUTP to dUMP without releasing the toxic dUTP intermediate. The chain is dCTP deaminase, dUMP-forming from Clostridium beijerinckii (strain ATCC 51743 / NCIMB 8052) (Clostridium acetobutylicum).